Reading from the N-terminus, the 260-residue chain is Exosome complex component Rrp42 (260 aa).

This sequence belongs to the RNase PH family. Rrp42 subfamily. Component of the archaeal exosome complex. Forms a hexameric ring-like arrangement composed of 3 Rrp41-Rrp42 heterodimers. The hexameric ring associates with a trimer of Rrp4 and/or Csl4 subunits.

It localises to the cytoplasm. In terms of biological role, non-catalytic component of the exosome, which is a complex involved in RNA degradation. Contributes to the structuring of the Rrp41 active site. The protein is Exosome complex component Rrp42 of Thermoplasma volcanium (strain ATCC 51530 / DSM 4299 / JCM 9571 / NBRC 15438 / GSS1).